We begin with the raw amino-acid sequence, 406 residues long: Cysteine desulfurase (406 aa).

At Lys226 the chain carries N6-(pyridoxal phosphate)lysine. Cys364 acts as the Cysteine persulfide intermediate in catalysis.

This sequence belongs to the class-V pyridoxal-phosphate-dependent aminotransferase family. Csd subfamily. As to quaternary structure, homodimer. Interacts with SufE and the SufBCD complex composed of SufB, SufC and SufD. The interaction with SufE is required to mediate the direct transfer of the sulfur atom from the S-sulfanylcysteine. Pyridoxal 5'-phosphate serves as cofactor.

It localises to the cytoplasm. It catalyses the reaction (sulfur carrier)-H + L-cysteine = (sulfur carrier)-SH + L-alanine. The catalysed reaction is L-selenocysteine + AH2 = hydrogenselenide + L-alanine + A + H(+). It functions in the pathway cofactor biosynthesis; iron-sulfur cluster biosynthesis. Its function is as follows. Cysteine desulfurases mobilize the sulfur from L-cysteine to yield L-alanine, an essential step in sulfur metabolism for biosynthesis of a variety of sulfur-containing biomolecules. Component of the suf operon, which is activated and required under specific conditions such as oxidative stress and iron limitation. Acts as a potent selenocysteine lyase in vitro, that mobilizes selenium from L-selenocysteine. Selenocysteine lyase activity is however unsure in vivo. This chain is Cysteine desulfurase, found in Escherichia coli O157:H7 (strain EC4115 / EHEC).